The sequence spans 341 residues: 4-hydroxy-2-oxovalerate aldolase 3 (341 aa).

One can recognise a Pyruvate carboxyltransferase domain in the interval 5 to 257 (ITLHDMTLRD…ETGVDVYRIA (253 aa)). 13–14 (RD) serves as a coordination point for substrate. Aspartate 14 serves as a coordination point for Mn(2+). Catalysis depends on histidine 17, which acts as the Proton acceptor. 2 residues coordinate substrate: serine 167 and histidine 196. Mn(2+) is bound by residues histidine 196 and histidine 198. Tyrosine 287 contributes to the substrate binding site.

This sequence belongs to the 4-hydroxy-2-oxovalerate aldolase family.

The catalysed reaction is (S)-4-hydroxy-2-oxopentanoate = acetaldehyde + pyruvate. The sequence is that of 4-hydroxy-2-oxovalerate aldolase 3 (bpHI) from Cupriavidus necator (strain ATCC 17699 / DSM 428 / KCTC 22496 / NCIMB 10442 / H16 / Stanier 337) (Ralstonia eutropha).